A 231-amino-acid chain; its full sequence is Probable septum site-determining protein MinC (231 aa).

Belongs to the MinC family. Interacts with MinD and FtsZ.

In terms of biological role, cell division inhibitor that blocks the formation of polar Z ring septums. Rapidly oscillates between the poles of the cell to destabilize FtsZ filaments that have formed before they mature into polar Z rings. Prevents FtsZ polymerization. The polypeptide is Probable septum site-determining protein MinC (Baumannia cicadellinicola subsp. Homalodisca coagulata).